An 823-amino-acid polypeptide reads, in one-letter code: Protein Jade-3 (823 aa).

The segment at 1–40 (MKRHRPVSSSESSDECPSTSFTSSSMYRKKSKNPKEQKKS) is disordered. Over residues 8–20 (SSSESSDECPSTS) the composition is skewed to low complexity. N6-acetyllysine is present on residues lysine 30, lysine 32, and lysine 35. Residues 200 to 250 (DVICDVCRSPDSEEGNDMVFCDKCNVCVHQACYGILKIPEGSWLCRSCVLG) form a PHD-type 1 zinc finger. Residues 252–286 (YPQCVLCPKKGGAMKTTRTGTKWAHVSCALWIPEV) form a C2HC pre-PHD-type zinc finger. The segment at 310–366 (LVCNLCKLKTGACIQCSVKSCITAFHVTCAFEHGLEMKTILDEGDEVKFKSFCLKHS) adopts a PHD-type 2 zinc-finger fold. Disordered regions lie at residues 543 to 585 (LKMP…PEEP) and 601 to 631 (KSNCLQTSRSHSRCETKSSSPTPRAPSAEFY). The segment covering 549 to 562 (TSEDCKDSSTETEH) has biased composition (basic and acidic residues). Phosphoserine occurs at positions 566 and 578. At lysine 601 the chain carries N6-acetyllysine. Position 608 is a phosphoserine (serine 608). Lysine 638 is subject to N6-acetyllysine. A disordered region spans residues 651–676 (SIGNGKNQPNSRVSSSNGLEGNWSGN). Lysine 735 bears the N6-acetyllysine mark. A disordered region spans residues 756 to 823 (TGRASYQETD…HPHSHSSMQR (68 aa)). Phosphoserine is present on residues serine 774 and serine 776. Residues 781–809 (EGSKETPRVKRESSDRENPSHDSARECHG) are compositionally biased toward basic and acidic residues.

This sequence belongs to the JADE family. As to quaternary structure, component of the HBO1 complex composed at least of ING4 or ING5, MYST2/HBO1, MEAF6, and one of JADE1, JADE2 and JADE3.

Functionally, scaffold subunit of some HBO1 complexes, which have a histone H4 acetyltransferase activity. This Mus musculus (Mouse) protein is Protein Jade-3 (Jade3).